The primary structure comprises 188 residues: UPF0301 protein CPn_0139/CP_0633/CPj0139/CpB0140 (188 aa).

It belongs to the UPF0301 (AlgH) family.

This is UPF0301 protein CPn_0139/CP_0633/CPj0139/CpB0140 from Chlamydia pneumoniae (Chlamydophila pneumoniae).